Reading from the N-terminus, the 354-residue chain is Dual-specificity RNA methyltransferase RlmN (354 aa).

Glutamate 89 functions as the Proton acceptor in the catalytic mechanism. The region spanning 106–339 is the Radical SAM core domain; that stretch reads KEAKYTVCVS…CTIRKSKGMD (234 aa). Cysteine 113 and cysteine 344 are oxidised to a cystine. Cysteine 120, cysteine 124, and cysteine 127 together coordinate [4Fe-4S] cluster. S-adenosyl-L-methionine-binding positions include 170–171, serine 202, 225–227, and asparagine 301; these read GE and SLH. The active-site S-methylcysteine intermediate is cysteine 344.

Belongs to the radical SAM superfamily. RlmN family. Requires [4Fe-4S] cluster as cofactor.

The protein resides in the cytoplasm. The enzyme catalyses adenosine(2503) in 23S rRNA + 2 reduced [2Fe-2S]-[ferredoxin] + 2 S-adenosyl-L-methionine = 2-methyladenosine(2503) in 23S rRNA + 5'-deoxyadenosine + L-methionine + 2 oxidized [2Fe-2S]-[ferredoxin] + S-adenosyl-L-homocysteine. It catalyses the reaction adenosine(37) in tRNA + 2 reduced [2Fe-2S]-[ferredoxin] + 2 S-adenosyl-L-methionine = 2-methyladenosine(37) in tRNA + 5'-deoxyadenosine + L-methionine + 2 oxidized [2Fe-2S]-[ferredoxin] + S-adenosyl-L-homocysteine. In terms of biological role, specifically methylates position 2 of adenine 2503 in 23S rRNA and position 2 of adenine 37 in tRNAs. m2A2503 modification seems to play a crucial role in the proofreading step occurring at the peptidyl transferase center and thus would serve to optimize ribosomal fidelity. This Nautilia profundicola (strain ATCC BAA-1463 / DSM 18972 / AmH) protein is Dual-specificity RNA methyltransferase RlmN.